The sequence spans 177 residues: Putative adenylate kinase (177 aa).

ATP-binding residues include G10, G12, K13, T14, and T15. Residues 30-50 (SLRDYAIEKGIGEMKGDELEV) are NMP. The segment at 99 to 109 (ERGYSREKVGE) is LID. R100 and K138 together coordinate ATP.

The protein belongs to the adenylate kinase family. AK6 subfamily. As to quaternary structure, interacts with uS11. Not a structural component of 40S pre-ribosomes, but transiently interacts with them by binding to uS11.

The enzyme catalyses AMP + ATP = 2 ADP. It carries out the reaction ATP + H2O = ADP + phosphate + H(+). Its function is as follows. Broad-specificity nucleoside monophosphate (NMP) kinase that catalyzes the reversible transfer of the terminal phosphate group between nucleoside triphosphates and monophosphates. Also has ATPase activity. Involved in the late maturation steps of the 30S ribosomal particles, specifically 16S rRNA maturation. While NMP activity is not required for ribosome maturation, ATPase activity is. Associates transiently with small ribosomal subunit protein uS11. ATP hydrolysis breaks the interaction with uS11. May temporarily remove uS11 from the ribosome to enable a conformational change of the ribosomal RNA that is needed for the final maturation step of the small ribosomal subunit. This chain is Putative adenylate kinase, found in Thermococcus gammatolerans (strain DSM 15229 / JCM 11827 / EJ3).